The chain runs to 541 residues: Light-independent protochlorophyllide reductase subunit B (541 aa).

Residue aspartate 36 coordinates [4Fe-4S] cluster. Aspartate 286 functions as the Proton donor in the catalytic mechanism. Substrate is bound at residue 421–422 (GM).

The protein belongs to the ChlB/BchB/BchZ family. As to quaternary structure, protochlorophyllide reductase is composed of three subunits; BchL, BchN and BchB. Forms a heterotetramer of two BchB and two BchN subunits. Requires [4Fe-4S] cluster as cofactor.

It catalyses the reaction chlorophyllide a + oxidized 2[4Fe-4S]-[ferredoxin] + 2 ADP + 2 phosphate = protochlorophyllide a + reduced 2[4Fe-4S]-[ferredoxin] + 2 ATP + 2 H2O. It participates in porphyrin-containing compound metabolism; bacteriochlorophyll biosynthesis (light-independent). Component of the dark-operative protochlorophyllide reductase (DPOR) that uses Mg-ATP and reduced ferredoxin to reduce ring D of protochlorophyllide (Pchlide) to form chlorophyllide a (Chlide). This reaction is light-independent. The NB-protein (BchN-BchB) is the catalytic component of the complex. This is Light-independent protochlorophyllide reductase subunit B from Chloroflexus aurantiacus (strain ATCC 29364 / DSM 637 / Y-400-fl).